The chain runs to 218 residues: Probable transaldolase (218 aa).

Lys84 (schiff-base intermediate with substrate) is an active-site residue.

Belongs to the transaldolase family. Type 3B subfamily.

Its subcellular location is the cytoplasm. It catalyses the reaction D-sedoheptulose 7-phosphate + D-glyceraldehyde 3-phosphate = D-erythrose 4-phosphate + beta-D-fructose 6-phosphate. It participates in carbohydrate degradation; pentose phosphate pathway; D-glyceraldehyde 3-phosphate and beta-D-fructose 6-phosphate from D-ribose 5-phosphate and D-xylulose 5-phosphate (non-oxidative stage): step 2/3. Transaldolase is important for the balance of metabolites in the pentose-phosphate pathway. The polypeptide is Probable transaldolase (Sulfurihydrogenibium sp. (strain YO3AOP1)).